A 542-amino-acid polypeptide reads, in one-letter code: CTP synthase (542 aa).

Residues methionine 1 to isoleucine 265 are amidoligase domain. Serine 13 contacts CTP. UTP is bound at residue serine 13. Position 14-19 (serine 14–leucine 19) interacts with ATP. Tyrosine 54 is an L-glutamine binding site. Residue aspartate 71 participates in ATP binding. Mg(2+)-binding residues include aspartate 71 and glutamate 139. CTP contacts are provided by residues aspartate 146–glutamate 148, lysine 186–glutamine 191, and lysine 222. Residues lysine 186–glutamine 191 and lysine 222 contribute to the UTP site. Arginine 238–alanine 240 serves as a coordination point for ATP. The Glutamine amidotransferase type-1 domain maps to tyrosine 298–methionine 541. Glycine 353 provides a ligand contact to L-glutamine. Cysteine 380 (nucleophile; for glutamine hydrolysis) is an active-site residue. L-glutamine contacts are provided by residues tyrosine 381–glutamine 384, glutamate 404, and arginine 469. Residues histidine 514 and glutamate 516 contribute to the active site.

This sequence belongs to the CTP synthase family. As to quaternary structure, homotetramer.

It carries out the reaction UTP + L-glutamine + ATP + H2O = CTP + L-glutamate + ADP + phosphate + 2 H(+). The catalysed reaction is L-glutamine + H2O = L-glutamate + NH4(+). It catalyses the reaction UTP + NH4(+) + ATP = CTP + ADP + phosphate + 2 H(+). It participates in pyrimidine metabolism; CTP biosynthesis via de novo pathway; CTP from UDP: step 2/2. Its activity is regulated as follows. Allosterically activated by GTP, when glutamine is the substrate; GTP has no effect on the reaction when ammonia is the substrate. The allosteric effector GTP functions by stabilizing the protein conformation that binds the tetrahedral intermediate(s) formed during glutamine hydrolysis. Inhibited by the product CTP, via allosteric rather than competitive inhibition. Its function is as follows. Catalyzes the ATP-dependent amination of UTP to CTP with either L-glutamine or ammonia as the source of nitrogen. Regulates intracellular CTP levels through interactions with the four ribonucleotide triphosphates. The protein is CTP synthase of Maricaulis maris (strain MCS10) (Caulobacter maris).